The following is a 249-amino-acid chain: LexA repressor (249 aa).

Positions 1–25 (MAAAATGGRATSQPKKTTKGLTPRQ) are disordered. A DNA-binding region (H-T-H motif) is located at residues 45-65 (MREIGDTVGLASLSSVTHQLS). Catalysis depends on for autocatalytic cleavage activity residues S173 and K210.

The protein belongs to the peptidase S24 family. In terms of assembly, homodimer.

It catalyses the reaction Hydrolysis of Ala-|-Gly bond in repressor LexA.. In terms of biological role, represses a number of genes involved in the response to DNA damage (SOS response), including recA and lexA. In the presence of single-stranded DNA, RecA interacts with LexA causing an autocatalytic cleavage which disrupts the DNA-binding part of LexA, leading to derepression of the SOS regulon and eventually DNA repair. This is LexA repressor from Pseudarthrobacter chlorophenolicus (strain ATCC 700700 / DSM 12829 / CIP 107037 / JCM 12360 / KCTC 9906 / NCIMB 13794 / A6) (Arthrobacter chlorophenolicus).